The following is a 354-amino-acid chain: Thiamine thiazole synthase 1, chloroplastic (354 aa).

A chloroplast-targeting transit peptide spans 1 to 45 (MATAAASSLLKSSFAGSRLPAATRTTPASLVVATGPRGAGAGPIC). Substrate is bound by residues alanine 100, 120–121 (EQ), glycine 128, and valine 193. Cysteine 222 carries the post-translational modification 2,3-didehydroalanine (Cys). Residues aspartate 224, histidine 239, methionine 291, and 301–303 (RMG) contribute to the substrate site.

Belongs to the THI4 family. Homooctamer. Fe cation is required as a cofactor. In terms of processing, during the catalytic reaction, a sulfide is transferred from Cys-222 to a reaction intermediate, generating a dehydroalanine residue. Highest expression in developing embryos and green leaves and a very low level expression seen in endosperm, roots, etiolated shoots and immature ears.

The protein resides in the plastid. It is found in the chloroplast. It catalyses the reaction [ADP-thiazole synthase]-L-cysteine + glycine + NAD(+) = [ADP-thiazole synthase]-dehydroalanine + ADP-5-ethyl-4-methylthiazole-2-carboxylate + nicotinamide + 3 H2O + 2 H(+). Its function is as follows. Involved in biosynthesis of the thiamine precursor thiazole. Catalyzes the conversion of NAD and glycine to adenosine diphosphate 5-(2-hydroxyethyl)-4-methylthiazole-2-carboxylic acid (ADT), an adenylated thiazole intermediate. The reaction includes an iron-dependent sulfide transfer from a conserved cysteine residue of the protein to a thiazole intermediate. The enzyme can only undergo a single turnover, which suggests it is a suicide enzyme. May have additional roles in adaptation to various stress conditions and in DNA damage tolerance. This Zea mays (Maize) protein is Thiamine thiazole synthase 1, chloroplastic.